Consider the following 316-residue polypeptide: Triplex capsid protein 2 (316 aa).

The protein belongs to the herpesviridae TRX2 protein family. As to quaternary structure, interacts with TRX1 and major capisd protein/MCP.

The protein localises to the virion. It localises to the host nucleus. Functionally, structural component of the T=16 icosahedral capsid. The capsid is composed of pentamers and hexamers of major capsid protein/MCP, which are linked together by heterotrimers called triplexes. These triplexes are formed by a single molecule of triplex protein 1/TRX1 and two copies of triplex protein 2/TRX2. Additionally, TRX1 is required for efficient transport of TRX2 to the nucleus, which is the site of capsid assembly. The protein is Triplex capsid protein 2 of Homo sapiens (Human).